We begin with the raw amino-acid sequence, 299 residues long: 4-diphosphocytidyl-2-C-methyl-D-erythritol kinase (299 aa).

The active site involves lysine 19. 110-120 lines the ATP pocket; sequence PVASGIGGGSA. Aspartate 152 is an active-site residue.

Belongs to the GHMP kinase family. IspE subfamily.

It carries out the reaction 4-CDP-2-C-methyl-D-erythritol + ATP = 4-CDP-2-C-methyl-D-erythritol 2-phosphate + ADP + H(+). It participates in isoprenoid biosynthesis; isopentenyl diphosphate biosynthesis via DXP pathway; isopentenyl diphosphate from 1-deoxy-D-xylulose 5-phosphate: step 3/6. Its function is as follows. Catalyzes the phosphorylation of the position 2 hydroxy group of 4-diphosphocytidyl-2C-methyl-D-erythritol. This chain is 4-diphosphocytidyl-2-C-methyl-D-erythritol kinase, found in Agrobacterium fabrum (strain C58 / ATCC 33970) (Agrobacterium tumefaciens (strain C58)).